The chain runs to 427 residues: Histidinol dehydrogenase (427 aa).

The NAD(+) site is built by tyrosine 123, glutamine 185, and asparagine 208. 3 residues coordinate substrate: serine 231, glutamine 253, and histidine 256. Zn(2+) is bound by residues glutamine 253 and histidine 256. Residues glutamate 321 and histidine 322 each act as proton acceptor in the active site. The substrate site is built by histidine 322, aspartate 355, glutamate 409, and histidine 414. Aspartate 355 provides a ligand contact to Zn(2+). A Zn(2+)-binding site is contributed by histidine 414.

It belongs to the histidinol dehydrogenase family. Zn(2+) is required as a cofactor.

It catalyses the reaction L-histidinol + 2 NAD(+) + H2O = L-histidine + 2 NADH + 3 H(+). Its pathway is amino-acid biosynthesis; L-histidine biosynthesis; L-histidine from 5-phospho-alpha-D-ribose 1-diphosphate: step 9/9. Functionally, catalyzes the sequential NAD-dependent oxidations of L-histidinol to L-histidinaldehyde and then to L-histidine. The chain is Histidinol dehydrogenase from Oceanobacillus iheyensis (strain DSM 14371 / CIP 107618 / JCM 11309 / KCTC 3954 / HTE831).